Consider the following 690-residue polypeptide: Eukaryotic translation initiation factor 3 subunit B (690 aa).

A compositionally biased stretch (basic and acidic residues) spans Met1–Gly11. Residues Met1–Asp33 are disordered. Acidic residues predominate over residues Asn15 to Phe25. An RRM domain is found at Ser57 to Asp141. WD repeat units follow at residues Thr207 to Lys246, Gly292 to Leu331, Ile334 to Lys369, Glu442 to Leu484, and Pro530 to Thr575. Residues Glu613 to Ile646 are a coiled coil.

The protein belongs to the eIF-3 subunit B family. As to quaternary structure, component of the eukaryotic translation initiation factor 3 (eIF-3) complex. The eIF-3 complex interacts with pix. Interacts with mxt.

It is found in the cytoplasm. Functionally, RNA-binding component of the eukaryotic translation initiation factor 3 (eIF-3) complex, which is involved in protein synthesis of a specialized repertoire of mRNAs and, together with other initiation factors, stimulates binding of mRNA and methionyl-tRNAi to the 40S ribosome. The eIF-3 complex specifically targets and initiates translation of a subset of mRNAs involved in cell proliferation. This Drosophila grimshawi (Hawaiian fruit fly) protein is Eukaryotic translation initiation factor 3 subunit B.